The primary structure comprises 368 residues: Ceramide synthase hyl-1 (368 aa).

Transmembrane regions (helical) follow at residues 27–47 (FVDL…RILW), 92–112 (ILEC…GLYV), 138–158 (IWWY…GSTF), 165–185 (FWQL…SWTI), 191–211 (GTLI…GKLV), 225–245 (FVLF…FIVI), and 275–295 (LIVF…FIIL). A TLC domain is found at 90-303 (KKILECFWRF…ILRIAYRTST (214 aa)). Residues 306-368 (QAKDVRSDSD…ARHRRAPRKE (63 aa)) are disordered. The span at 343–353 (TDDDDDEGEEE) shows a compositional bias: acidic residues. The span at 357 to 368 (RKARHRRAPRKE) shows a compositional bias: basic residues.

It belongs to the sphingosine N-acyltransferase family.

It localises to the membrane. It carries out the reaction a very long-chain fatty acyl-CoA + a sphingoid base = an N-(very-long-chain fatty acyl)-sphingoid base + CoA + H(+). The catalysed reaction is 15-methylhexadecasphinganine + a fatty acyl-CoA = an N-acyl-15-methylhexadecasphinganine + CoA + H(+). It catalyses the reaction a fatty acyl-CoA + sphinganine = an N-acylsphinganine + CoA + H(+). The enzyme catalyses sphinganine + tetradecanoyl-CoA = N-(tetradecanoyl)-sphinganine + CoA + H(+). It carries out the reaction hexacosanoyl-CoA + sphinganine = N-hexacosanoylsphinganine + CoA + H(+). It functions in the pathway lipid metabolism; sphingolipid metabolism. In terms of biological role, catalyzes the acylation of sphingoid bases to form ceramides, which are key players in cell signaling events such as extending lifespan and enhancing stress resistance. C.elegans contain specific sphingoid bases, which are unique or different in structure compared to the sphingoid bases found in other animals. Two examples of these distinctive compounds are: 15-methylhexadecasphinganine and 15-methylhexadecasphing-4-enine. Exhibits substrate preference for fatty acyl-coA chains containing carbon chain length (C16-C18) and very long chains (24 carbons and more). The chain is Ceramide synthase hyl-1 (hyl-1) from Caenorhabditis elegans.